A 365-amino-acid chain; its full sequence is Spermidine/putrescine import ATP-binding protein PotA (365 aa).

The region spanning 7 to 237 is the ABC transporter domain; the sequence is LTLADITKRF…PNNLFVASFI (231 aa). Position 39–46 (39–46) interacts with ATP; the sequence is GPSGCGKT.

Belongs to the ABC transporter superfamily. Spermidine/putrescine importer (TC 3.A.1.11.1) family. In terms of assembly, the complex is composed of two ATP-binding proteins (PotA), two transmembrane proteins (PotB and PotC) and a solute-binding protein (PotD).

It is found in the cell inner membrane. The catalysed reaction is ATP + H2O + polyamine-[polyamine-binding protein]Side 1 = ADP + phosphate + polyamineSide 2 + [polyamine-binding protein]Side 1.. Functionally, part of the ABC transporter complex PotABCD involved in spermidine/putrescine import. Responsible for energy coupling to the transport system. In Hahella chejuensis (strain KCTC 2396), this protein is Spermidine/putrescine import ATP-binding protein PotA.